A 370-amino-acid polypeptide reads, in one-letter code: Phospho-2-dehydro-3-deoxyheptonate aldolase, tyrosine-inhibited (370 aa).

Residue Ser2 is modified to N-acetylserine.

Belongs to the class-I DAHP synthase family.

It catalyses the reaction D-erythrose 4-phosphate + phosphoenolpyruvate + H2O = 7-phospho-2-dehydro-3-deoxy-D-arabino-heptonate + phosphate. It functions in the pathway metabolic intermediate biosynthesis; chorismate biosynthesis; chorismate from D-erythrose 4-phosphate and phosphoenolpyruvate: step 1/7. With respect to regulation, inhibited by tyrosine. In terms of biological role, stereospecific condensation of phosphoenolpyruvate (PEP) and D-erythrose-4-phosphate (E4P) giving rise to 3-deoxy-D-arabino-heptulosonate-7-phosphate (DAHP). In Saccharomyces cerevisiae (strain ATCC 204508 / S288c) (Baker's yeast), this protein is Phospho-2-dehydro-3-deoxyheptonate aldolase, tyrosine-inhibited (ARO4).